A 388-amino-acid polypeptide reads, in one-letter code: MAVHNLKDLLAEGVSGRGVLVRSDLNVPLDSDGEQGRITDPGPDHRVGADVERTGRGGRQGGGRRAPRASQEWAGPGVVAGPGGRRARRAAGPARAAGLGRGGHRRPGPRRGVDRRRRPAAGKHPVRRPRNVQGRRRAARAGRQMAELVGPTGAFVSDGFGVVHRKQASVYDVATLLPHYAGTLVAEEIAVLEQLTGSTKRPYAVVLGGSKVSDKLGVIESLATKADSIVIGGGMCFTFLAAQGFSVGKSLVETEMVDTCRRLLDTYVDVLRLPVDMVAADRLAADAAPQTVPADAIPDDLMGVDIGPGSVKRFTALLSNAETMFWNGPMGVFEFPAFAAGTKGLAEAIAAATGKGAFSVVGGGDSAAATAVELQLLFPLVRLIARLA.

Substrate-binding positions include 24–26 (DLN), Arg-37, 56–59 (RGGR), Arg-117, and Arg-165. A disordered region spans residues 26–136 (NVPLDSDGEQ…RRPRNVQGRR (111 aa)). A compositionally biased stretch (basic and acidic residues) spans 34-55 (EQGRITDPGPDHRVGADVERTG). Residues 102–136 (GGHRRPGPRRGVDRRRRPAAGKHPVRRPRNVQGRR) are compositionally biased toward basic residues. Residues Lys-215, Gly-303, Glu-334, and 363 to 366 (GGDS) contribute to the ATP site.

The protein belongs to the phosphoglycerate kinase family. Monomer.

It is found in the cytoplasm. The enzyme catalyses (2R)-3-phosphoglycerate + ATP = (2R)-3-phospho-glyceroyl phosphate + ADP. It functions in the pathway carbohydrate degradation; glycolysis; pyruvate from D-glyceraldehyde 3-phosphate: step 2/5. The sequence is that of Phosphoglycerate kinase (pgk) from Mycobacterium avium.